A 361-amino-acid polypeptide reads, in one-letter code: Riboflavin biosynthesis protein RibD (361 aa).

One can recognise a CMP/dCMP-type deaminase domain in the interval 1-122; the sequence is MEEYYMKLAL…MMKEAGIEVR (122 aa). The deaminase stretch occupies residues 1–144; sequence MEEYYMKLAL…EKFLHFMRTG (144 aa). Zn(2+) is bound at residue His49. Catalysis depends on Glu51, which acts as the Proton donor. Residues Cys74 and Cys83 each contribute to the Zn(2+) site. A reductase region spans residues 145 to 361; sequence LPYVTLKAAA…IKLTAKPTKE (217 aa). Ala153 is a binding site for NADP(+). Ser167 contacts substrate. Position 169 (Trp169) interacts with NADP(+). Arg183 contacts substrate. The NADP(+) site is built by Thr195 and Asp199. Substrate is bound by residues Leu203 and Arg206. NADP(+) is bound at residue Thr221. Residue Glu290 participates in substrate binding. An NADP(+)-binding site is contributed by 292 to 298; that stretch reads GSAVHGS.

It in the N-terminal section; belongs to the cytidine and deoxycytidylate deaminase family. The protein in the C-terminal section; belongs to the HTP reductase family. Homotetramer. Zn(2+) serves as cofactor.

It catalyses the reaction 2,5-diamino-6-hydroxy-4-(5-phosphoribosylamino)-pyrimidine + H2O + H(+) = 5-amino-6-(5-phospho-D-ribosylamino)uracil + NH4(+). It carries out the reaction 5-amino-6-(5-phospho-D-ribitylamino)uracil + NADP(+) = 5-amino-6-(5-phospho-D-ribosylamino)uracil + NADPH + H(+). Its pathway is cofactor biosynthesis; riboflavin biosynthesis; 5-amino-6-(D-ribitylamino)uracil from GTP: step 2/4. It functions in the pathway cofactor biosynthesis; riboflavin biosynthesis; 5-amino-6-(D-ribitylamino)uracil from GTP: step 3/4. Its function is as follows. Converts 2,5-diamino-6-(ribosylamino)-4(3h)-pyrimidinone 5'-phosphate into 5-amino-6-(ribosylamino)-2,4(1h,3h)-pyrimidinedione 5'-phosphate. The protein is Riboflavin biosynthesis protein RibD (ribD) of Bacillus subtilis (strain 168).